Reading from the N-terminus, the 421-residue chain is Acyl-coenzyme A thioesterase 5 (421 aa).

Catalysis depends on charge relay system residues Ser-232, Asp-326, and His-360. The Microbody targeting signal signature appears at 419-421; the sequence is AKL.

Belongs to the C/M/P thioester hydrolase family. In terms of tissue distribution, highly expressed in spleen, brain, testis and proximal and distal intestine; expressed at low level in the liver.

It localises to the peroxisome. It carries out the reaction hexadecanoyl-CoA + H2O = hexadecanoate + CoA + H(+). The catalysed reaction is decanoyl-CoA + H2O = decanoate + CoA + H(+). It catalyses the reaction octanoyl-CoA + H2O = octanoate + CoA + H(+). The enzyme catalyses dodecanoyl-CoA + H2O = dodecanoate + CoA + H(+). It carries out the reaction tetradecanoyl-CoA + H2O = tetradecanoate + CoA + H(+). The catalysed reaction is octadecanoyl-CoA + H2O = octadecanoate + CoA + H(+). It catalyses the reaction eicosanoyl-CoA + H2O = eicosanoate + CoA + H(+). The enzyme catalyses (9Z)-octadecenoyl-CoA + H2O = (9Z)-octadecenoate + CoA + H(+). It carries out the reaction (9Z,12Z)-octadecadienoyl-CoA + H2O = (9Z,12Z)-octadecadienoate + CoA + H(+). The catalysed reaction is (5Z,8Z,11Z,14Z)-eicosatetraenoyl-CoA + H2O = (5Z,8Z,11Z,14Z)-eicosatetraenoate + CoA + H(+). It catalyses the reaction (9Z)-hexadecenoyl-CoA + H2O = (9Z)-hexadecenoate + CoA + H(+). It participates in lipid metabolism; fatty acid metabolism. Functionally, catalyzes the hydrolysis of acyl-CoAs into free fatty acids and coenzyme A (CoASH), regulating their respective intracellular levels. Mainly active on medium-chain acyl-CoAs. Seems to be involved in intraperoxisomal regulation of acyl-CoA levels, but not CoASH levels. May have a function in termination of beta-oxidation of fatty acids. This chain is Acyl-coenzyme A thioesterase 5 (Acot5), found in Mus musculus (Mouse).